Consider the following 316-residue polypeptide: Leucine-rich repeat-containing protein 73 (316 aa).

LRR repeat units lie at residues 57–78, 86–106, 114–137, 145–166, 174–187, 202–223, and 231–250; these read SLAQ…KQLA, SIQS…ALLN, ALVA…CGLL, GLKE…SRLA, QVRV…PLGD, TLEV…TLLD, and ALRS…QQQI. Residues 257–296 form a disordered region; sequence GEEEEEMAGGAADTQEWGRGREPAAHQRGGSSWKCPSDPN. Residues 272–281 show a composition bias toward basic and acidic residues; that stretch reads EWGRGREPAA.

This chain is Leucine-rich repeat-containing protein 73 (Lrrc73), found in Rattus norvegicus (Rat).